The following is a 132-amino-acid chain: Small ribosomal subunit protein uS13 (132 aa).

A compositionally biased stretch (basic residues) spans 101–125 (RGLPVRGQRTKTNARTRKGPRKTVA). A disordered region spans residues 101–132 (RGLPVRGQRTKTNARTRKGPRKTVANKKIETR).

Belongs to the universal ribosomal protein uS13 family. Part of the 30S ribosomal subunit. Forms a loose heterodimer with protein S19. Forms two bridges to the 50S subunit in the 70S ribosome.

Its function is as follows. Located at the top of the head of the 30S subunit, it contacts several helices of the 16S rRNA. In the 70S ribosome it contacts the 23S rRNA (bridge B1a) and protein L5 of the 50S subunit (bridge B1b), connecting the 2 subunits; these bridges are implicated in subunit movement. Contacts the tRNAs in the A and P-sites. The chain is Small ribosomal subunit protein uS13 from Ureaplasma parvum serovar 3 (strain ATCC 27815 / 27 / NCTC 11736).